Here is a 151-residue protein sequence, read N- to C-terminus: Prefoldin subunit alpha (151 aa).

Belongs to the prefoldin subunit alpha family. In terms of assembly, heterohexamer of two alpha and four beta subunits.

Its subcellular location is the cytoplasm. Its function is as follows. Molecular chaperone capable of stabilizing a range of proteins. Seems to fulfill an ATP-independent, HSP70-like function in archaeal de novo protein folding. This Aeropyrum pernix (strain ATCC 700893 / DSM 11879 / JCM 9820 / NBRC 100138 / K1) protein is Prefoldin subunit alpha (pfdA).